Consider the following 378-residue polypeptide: Heat-inducible transcription repressor HrcA (378 aa).

The protein belongs to the HrcA family.

Functionally, negative regulator of class I heat shock genes (grpE-dnaK-dnaJ and groELS operons). Prevents heat-shock induction of these operons. The chain is Heat-inducible transcription repressor HrcA from Synechocystis sp. (strain ATCC 27184 / PCC 6803 / Kazusa).